We begin with the raw amino-acid sequence, 307 residues long: Transaldolase (307 aa).

The active-site Schiff-base intermediate with substrate is the lysine 125.

The protein belongs to the transaldolase family. Type 1 subfamily. As to quaternary structure, homodimer.

It is found in the cytoplasm. The catalysed reaction is D-sedoheptulose 7-phosphate + D-glyceraldehyde 3-phosphate = D-erythrose 4-phosphate + beta-D-fructose 6-phosphate. The protein operates within carbohydrate degradation; pentose phosphate pathway; D-glyceraldehyde 3-phosphate and beta-D-fructose 6-phosphate from D-ribose 5-phosphate and D-xylulose 5-phosphate (non-oxidative stage): step 2/3. Its function is as follows. Transaldolase is important for the balance of metabolites in the pentose-phosphate pathway. The chain is Transaldolase from Pseudomonas aeruginosa (strain LESB58).